Consider the following 564-residue polypeptide: Eukaryotic translation initiation factor 3 subunit L (564 aa).

N-acetylserine is present on serine 2. Position 21 is a phosphoserine (serine 21). The PCI domain occupies 331–537 (DAIRVFANIL…IHIADTKVAR (207 aa)). An N6-acetyllysine mark is found at lysine 465 and lysine 549.

In terms of assembly, component of the eukaryotic translation initiation factor 3 (eIF-3) complex, which is composed of 13 subunits: EIF3A, EIF3B, EIF3C, EIF3D, EIF3E, EIF3F, EIF3G, EIF3H, EIF3I, EIF3J, EIF3K, EIF3L and EIF3M. The eIF-3 complex appears to include 3 stable modules: module A is composed of EIF3A, EIF3B, EIF3G and EIF3I; module B is composed of EIF3F, EIF3H, and EIF3M; and module C is composed of EIF3C, EIF3D, EIF3E, EIF3K and EIF3L. EIF3C of module C binds EIF3B of module A and EIF3H of module B, thereby linking the three modules. EIF3J is a labile subunit that binds to the eIF-3 complex via EIF3B. The eIF-3 complex interacts with RPS6KB1 under conditions of nutrient depletion. Mitogenic stimulation leads to binding and activation of a complex composed of MTOR and RPTOR, leading to phosphorylation and release of RPS6KB1 and binding of EIF4B to eIF-3. Interacts with RRN3.

The protein localises to the cytoplasm. In terms of biological role, component of the eukaryotic translation initiation factor 3 (eIF-3) complex, which is required for several steps in the initiation of protein synthesis. The eIF-3 complex associates with the 40S ribosome and facilitates the recruitment of eIF-1, eIF-1A, eIF-2:GTP:methionyl-tRNAi and eIF-5 to form the 43S pre-initiation complex (43S PIC). The eIF-3 complex stimulates mRNA recruitment to the 43S PIC and scanning of the mRNA for AUG recognition. The eIF-3 complex is also required for disassembly and recycling of post-termination ribosomal complexes and subsequently prevents premature joining of the 40S and 60S ribosomal subunits prior to initiation. The eIF-3 complex specifically targets and initiates translation of a subset of mRNAs involved in cell proliferation, including cell cycling, differentiation and apoptosis, and uses different modes of RNA stem-loop binding to exert either translational activation or repression. (Microbial infection) In case of FCV infection, plays a role in the ribosomal termination-reinitiation event leading to the translation of VP2. The polypeptide is Eukaryotic translation initiation factor 3 subunit L (Homo sapiens (Human)).